We begin with the raw amino-acid sequence, 429 residues long: Ribosomal RNA small subunit methyltransferase B (429 aa).

Residues 254-260 (CAAPGGK), Asp-277, Asp-303, and Asp-322 each bind S-adenosyl-L-methionine. Cys-375 (nucleophile) is an active-site residue. The tract at residues 397 to 419 (ALSETGTPDQPGQQNLPGGEEGD) is disordered. Over residues 400 to 412 (ETGTPDQPGQQNL) the composition is skewed to polar residues.

Belongs to the class I-like SAM-binding methyltransferase superfamily. RsmB/NOP family.

The protein localises to the cytoplasm. The enzyme catalyses cytidine(967) in 16S rRNA + S-adenosyl-L-methionine = 5-methylcytidine(967) in 16S rRNA + S-adenosyl-L-homocysteine + H(+). Specifically methylates the cytosine at position 967 (m5C967) of 16S rRNA. The chain is Ribosomal RNA small subunit methyltransferase B from Salmonella agona (strain SL483).